The primary structure comprises 121 residues: Large ribosomal subunit protein eL8 (121 aa).

It belongs to the eukaryotic ribosomal protein eL8 family. In terms of assembly, part of the 50S ribosomal subunit. Probably part of the RNase P complex.

Its subcellular location is the cytoplasm. Functionally, multifunctional RNA-binding protein that recognizes the K-turn motif in ribosomal RNA, the RNA component of RNase P, box H/ACA, box C/D and box C'/D' sRNAs. The chain is Large ribosomal subunit protein eL8 from Thermoplasma volcanium (strain ATCC 51530 / DSM 4299 / JCM 9571 / NBRC 15438 / GSS1).